Here is a 389-residue protein sequence, read N- to C-terminus: MSHRKYEAPRHGSLGFLPRKRSANIRGRVKSFPKDVKSKPVALTAFLGYKAGMTTVVRDLDRPGSKMHKREIVEAATVVDTPPLVVVGVVGYVETPRGLRSLTTVWAEHLSEEVRRRFYKNWYKSKKKAFTKYSAKYAQDGAQVERELARIKKYASVVRVLAHTQIKKTPLAQKKAHLAEIQVNGGSVSDKVDWAKEHFEKTVSVDSVFEKDEMVDVAAVTKGHGFEGVTHRWGTKKLPRKTHRGLRKVACIGAWHPANVQWTVARAGQNGFHHRTSINHKVYRVGSAGDESSGATEFDRTKKTINPMGGFVRYGNVKNDFMLLKGSIPGVKKRIVTIRKSLYVDTSRRATENVNLKWIDTASKFGKGRFQTPAEKHAFLGTLKKDLEK.

The protein belongs to the universal ribosomal protein uL3 family.

The protein localises to the cytoplasm. The sequence is that of Large ribosomal subunit protein uL3 (RPL3) from Debaryomyces hansenii (strain ATCC 36239 / CBS 767 / BCRC 21394 / JCM 1990 / NBRC 0083 / IGC 2968) (Yeast).